The following is a 107-amino-acid chain: UPF0122 protein EAT1b_2891 (107 aa).

The protein belongs to the UPF0122 family.

Functionally, might take part in the signal recognition particle (SRP) pathway. This is inferred from the conservation of its genetic proximity to ftsY/ffh. May be a regulatory protein. This is UPF0122 protein EAT1b_2891 from Exiguobacterium sp. (strain ATCC BAA-1283 / AT1b).